A 661-amino-acid chain; its full sequence is MFRTPHTLQFCSVHYKTFIDAIHALQSRISQKVLCRSCSSRVSGPAKKYDVDPSQFPQENIRNFCIVAHVDHGKSTLSDRLLEFTDTIRTSKDNQQVLDRLPVERERGITVKAQTVSMVYHRPGHESPFLLNLIDTPGHVDFSYEVLRSVAVCQGVILLVDANQGVQAQTVANFNMAFCSDLTILPVLNKVDLKNADVEGVTSQMENLFGTRREDVLKVSAKLGTGVEELIEAIIDRIPSPKGDADAKFRGFLLDSWYDRYRGVIALLMAVDGTLRLGDEIISHMTGTSYTVRDLGFLNPLETPTAMLCAGQAGYVVANMRSPKEAHVGDTLSHKSADIKPLPKLEESKPMVFAGIYPEDQSQNNELRSAIDRLLLNDPSVQVSIESNPALGQGWRLGFLGLLHMDVFCQRLDQEFDAQVVVTAPSVSYKVKVHGAKNIKKYGGEMVTVNNPLHLPDRSIIREYYEPMAFGTIITPGTYLRDVTSLCVDRRGVPKSTQDVDDNTILLQYKFPLNEIIVDFYDELKSITSGYASFDYEETGYEESSLVQMQILINGKVVEELTTIVHTTRAQRVGRSMLLKLKECIPQQLYAVALQAAVGAKVLAREDIRALKKNVLAKCYGGDITRKVKLLKRHSEKQKKLRLIGNVEVPRDAFIKVLKRT.

The tr-type G domain maps to 59 to 242 (ENIRNFCIVA…AIIDRIPSPK (184 aa)). GTP contacts are provided by residues 68–75 (AHVDHGKS), 135–139 (DTPGH), and 189–192 (NKVD).

The protein belongs to the TRAFAC class translation factor GTPase superfamily. Classic translation factor GTPase family. LepA subfamily.

It is found in the mitochondrion inner membrane. The enzyme catalyses GTP + H2O = GDP + phosphate + H(+). In terms of biological role, promotes mitochondrial protein synthesis. May act as a fidelity factor of the translation reaction, by catalyzing a one-codon backward translocation of tRNAs on improperly translocated ribosomes. Binds to mitochondrial ribosomes in a GTP-dependent manner. The protein is Translation factor GUF1 homolog, mitochondrial of Ixodes scapularis (Black-legged tick).